Here is a 274-residue protein sequence, read N- to C-terminus: uncharacterized protein (274 aa).

This sequence belongs to the PhoU family.

This is an uncharacterized protein from Deinococcus radiodurans (strain ATCC 13939 / DSM 20539 / JCM 16871 / CCUG 27074 / LMG 4051 / NBRC 15346 / NCIMB 9279 / VKM B-1422 / R1).